The chain runs to 391 residues: Na(+)/H(+) antiporter NhaA (391 aa).

Transmembrane regions (helical) follow at residues 14–34 (AGGI…NSPL), 59–79 (LIHW…GLEV), 95–115 (SLPT…YLIF), 124–144 (VGWA…MALL), 154–174 (VFLL…IALF), 177–197 (TDLS…LIGL), 213–233 (LILW…GVII), 261–281 (FIIL…GMSL), 292–312 (IALG…YIAV), 331–351 (VAVM…LAFV), and 363–383 (LGIL…LSKV).

This sequence belongs to the NhaA Na(+)/H(+) (TC 2.A.33) antiporter family.

It is found in the cell inner membrane. The catalysed reaction is Na(+)(in) + 2 H(+)(out) = Na(+)(out) + 2 H(+)(in). In terms of biological role, na(+)/H(+) antiporter that extrudes sodium in exchange for external protons. The polypeptide is Na(+)/H(+) antiporter NhaA (Shewanella pealeana (strain ATCC 700345 / ANG-SQ1)).